The sequence spans 1534 residues: Dicer-like protein 2 (1534 aa).

Over residues 1–10 the composition is skewed to basic and acidic residues; that stretch reads MDQDPRKDNP. The segment at 1–36 is disordered; sequence MDQDPRKDNPVEMDVDRDDSSQDPDDNESFKSALDE. Positions 11–27 are enriched in acidic residues; that stretch reads VEMDVDRDDSSQDPDDN. The Helicase ATP-binding domain occupies 65-249; that stretch reads TPAALTARAY…IEKLEQVLDA (185 aa). 78–85 contacts ATP; that stretch reads MFEASLKQ. Positions 192–195 match the DEAH box motif; that stretch reads DEAH. One can recognise a Helicase C-terminal domain in the interval 404 to 575; it reads KVQTLLKVLA…NAELELLDDP (172 aa). The 104-residue stretch at 597 to 700 folds into the Dicer dsRNA-binding fold domain; the sequence is ARSHLNHFCA…LPTKVSDFLA (104 aa). 2 RNase III domains span residues 959–1107 and 1153–1353; these read MSLV…MCGG and LEPL…VDSG. Glutamate 1193, aspartate 1339, and glutamate 1342 together coordinate Mg(2+). The 101-residue stretch at 1383–1483 folds into the DRBM domain; that stretch reads HPNVELQILA…AEKGCLVIKA (101 aa). Residues 1492–1504 are compositionally biased toward basic and acidic residues; that stretch reads KAAAKEDKGHNTE. Residues 1492-1534 form a disordered region; it reads KAAAKEDKGHNTENGDANADNGQSGEKEEVPDCRDADGDTVMN. Residues 1505-1515 show a composition bias toward polar residues; the sequence is NGDANADNGQS. The segment covering 1516–1528 has biased composition (basic and acidic residues); the sequence is GEKEEVPDCRDAD.

This sequence belongs to the helicase family. Dicer subfamily. Requires Mg(2+) as cofactor. Mn(2+) is required as a cofactor.

Functionally, dicer-like endonuclease involved in cleaving double-stranded RNA in the RNA interference (RNAi) pathway. Produces 21 to 25 bp dsRNAs (siRNAs) which target the selective destruction of homologous RNAs leading to sequence-specific suppression of gene expression, called post-transcriptional gene silencing (PTGS). Part of a broad host defense response against viral infection and transposons. Controls the expression of the non-LTR retrotransposon Tad in the African strain, Adiomopoume. The chain is Dicer-like protein 2 (dcl-2) from Neurospora crassa (strain ATCC 24698 / 74-OR23-1A / CBS 708.71 / DSM 1257 / FGSC 987).